The sequence spans 369 residues: Dehydrogenase pigH (369 aa).

One can recognise an Enoyl reductase (ER) domain in the interval 13–367; that stretch reads KAPLLEVKAA…QGVSAKKIVV (355 aa). 44-49 is a binding site for NADP(+); that stretch reads IDWLIQ. 2 N-linked (GlcNAc...) asparagine glycosylation sites follow: N79 and N101. Residues 197-200 and Y215 each bind NADP(+); that span reads SRKN. The chain crosses the membrane as a helical span at residues 280–300; it reads TIIFFVSWIISFKFKGLLKGI. An NADP(+)-binding site is contributed by 360–361; the sequence is VS.

This sequence belongs to the zinc-containing alcohol dehydrogenase family.

The protein localises to the membrane. The protein operates within secondary metabolite biosynthesis. Its function is as follows. Dehydrogenase; part of the gene cluster that mediates the biosynthesis of azaphilone pigments (MonAzPs), a complex mixture of compounds with a common azaphilone skeleton very widely used as food colorants. Within the pathway, pigH might be involved in the late steps of yellow pigments monascin and ankaflavin biosynthesis. The first step of the pathway is performed by the nrPKS pigA that forms the hexaketide precursor from successive condensations of five malonyl-CoA units, with a simple acetyl-CoA starter unit. The role of esterase pigG is not clear, but it may play at most a supplementary role in the formation of the benzaldehyde produced by the pigA nrPKS. This very reactive benzaldehyde is intercepted by the pigC ketoreductase that to provide the first stable enzyme-free MonAzPs intermediate, 6-(4-hydroxy-2-oxopentyl)-3-methyl-2,4-dioxocyclohexane carbaldehyde, also known as M7PKS-1. The FAD-dependent monooxygenase pigN hydroxylates M7PKS-1 at C-4, which triggers the formation of the pyran ring. PigJ, pigK and pigD are involved in the acetylation of the pyran ring. PigJ and pigK form the two subunits of a dedicated fungal FAS that produces the side chain fatty acyl moiety of MonAzPs and pigD transfers the fatty acyl chain to the C-4 alcohol. PigM and pigO are involved in the elimination of the omega-1 alcohol. PigM acts as an O-acetyltransferase that synthesizes the putative O-11 acetyl intermediate whereas pigO eliminates acetic acid to yield an intermediate with a C10(11) double bond. The dehydration of the C-11 alcohol followed by the reduction of the C6(7) double bond by the NAD(P)H-dependent oxidoreductase pigE increases the electrophilicity of the C-5 ketone of the resulting acyl benzopyran. This in turn sets up the C-5 ketone for an intramolecular Knoevenagel aldol condensation with the C-20 enol of the side chain. This condensation affords the characteristic linear tricyclic carbon skeletons of the yellow pigments that serve as the common precursors for the classical yellow pigments monascin and ankaflavin, orange pigments rubopunctatin and monascorubrin, and red pigments ribropunctamine and monascorubramine. The FAD-dependent oxidoreductase pigF is especially invoved in the biosynthesis of orange and red pigments via desaturation of C6(7). The sequence is that of Dehydrogenase pigH from Monascus ruber (Mold).